Consider the following 243-residue polypeptide: Uridylate kinase (243 aa).

An ATP-binding site is contributed by 15–18; the sequence is KLSG. Residues 23–28 are involved in allosteric activation by GTP; sequence GSEGFG. Gly57 contributes to the UMP binding site. Residues Gly58 and Arg62 each contribute to the ATP site. Residues Asp77 and 138-145 contribute to the UMP site; that span reads TGNPFFTT. Thr165, Tyr171, and Asp174 together coordinate ATP.

This sequence belongs to the UMP kinase family. In terms of assembly, homohexamer.

Its subcellular location is the cytoplasm. It catalyses the reaction UMP + ATP = UDP + ADP. It functions in the pathway pyrimidine metabolism; CTP biosynthesis via de novo pathway; UDP from UMP (UMPK route): step 1/1. With respect to regulation, allosterically activated by GTP. Inhibited by UTP. In terms of biological role, catalyzes the reversible phosphorylation of UMP to UDP. This chain is Uridylate kinase, found in Vibrio cholerae serotype O1 (strain ATCC 39541 / Classical Ogawa 395 / O395).